Consider the following 372-residue polypeptide: UDP-N-acetylglucosamine--N-acetylmuramyl-(pentapeptide) pyrophosphoryl-undecaprenol N-acetylglucosamine transferase (372 aa).

UDP-N-acetyl-alpha-D-glucosamine-binding positions include 16-18 (TGG), Asn-128, Arg-164, Ser-192, Ile-250, and Gln-295.

Belongs to the glycosyltransferase 28 family. MurG subfamily.

The protein resides in the cell inner membrane. It carries out the reaction di-trans,octa-cis-undecaprenyl diphospho-N-acetyl-alpha-D-muramoyl-L-alanyl-D-glutamyl-meso-2,6-diaminopimeloyl-D-alanyl-D-alanine + UDP-N-acetyl-alpha-D-glucosamine = di-trans,octa-cis-undecaprenyl diphospho-[N-acetyl-alpha-D-glucosaminyl-(1-&gt;4)]-N-acetyl-alpha-D-muramoyl-L-alanyl-D-glutamyl-meso-2,6-diaminopimeloyl-D-alanyl-D-alanine + UDP + H(+). It participates in cell wall biogenesis; peptidoglycan biosynthesis. In terms of biological role, cell wall formation. Catalyzes the transfer of a GlcNAc subunit on undecaprenyl-pyrophosphoryl-MurNAc-pentapeptide (lipid intermediate I) to form undecaprenyl-pyrophosphoryl-MurNAc-(pentapeptide)GlcNAc (lipid intermediate II). The polypeptide is UDP-N-acetylglucosamine--N-acetylmuramyl-(pentapeptide) pyrophosphoryl-undecaprenol N-acetylglucosamine transferase (Paraburkholderia xenovorans (strain LB400)).